Reading from the N-terminus, the 415-residue chain is NADH-quinone oxidoreductase subunit D (415 aa).

Belongs to the complex I 49 kDa subunit family. In terms of assembly, NDH-1 is composed of 14 different subunits. Subunits NuoB, C, D, E, F, and G constitute the peripheral sector of the complex.

The protein resides in the cell inner membrane. It carries out the reaction a quinone + NADH + 5 H(+)(in) = a quinol + NAD(+) + 4 H(+)(out). Functionally, NDH-1 shuttles electrons from NADH, via FMN and iron-sulfur (Fe-S) centers, to quinones in the respiratory chain. The immediate electron acceptor for the enzyme in this species is believed to be ubiquinone. Couples the redox reaction to proton translocation (for every two electrons transferred, four hydrogen ions are translocated across the cytoplasmic membrane), and thus conserves the redox energy in a proton gradient. The sequence is that of NADH-quinone oxidoreductase subunit D from Myxococcus xanthus (strain DK1622).